The following is a 579-amino-acid chain: 2-isopropylmalate synthase (579 aa).

The Pyruvate carboxyltransferase domain occupies 40–314 (PRWCAVDLRD…DPMIDFSDID (275 aa)). Mg(2+) contacts are provided by Asp49, His253, His255, and Asn289. The interval 456–579 (SDEEQAQWGR…VNRAVRDAQA (124 aa)) is regulatory domain.

The protein belongs to the alpha-IPM synthase/homocitrate synthase family. LeuA type 2 subfamily. As to quaternary structure, homodimer. Mg(2+) serves as cofactor.

Its subcellular location is the cytoplasm. The enzyme catalyses 3-methyl-2-oxobutanoate + acetyl-CoA + H2O = (2S)-2-isopropylmalate + CoA + H(+). It participates in amino-acid biosynthesis; L-leucine biosynthesis; L-leucine from 3-methyl-2-oxobutanoate: step 1/4. In terms of biological role, catalyzes the condensation of the acetyl group of acetyl-CoA with 3-methyl-2-oxobutanoate (2-ketoisovalerate) to form 3-carboxy-3-hydroxy-4-methylpentanoate (2-isopropylmalate). This chain is 2-isopropylmalate synthase, found in Paenarthrobacter aurescens (strain TC1).